A 74-amino-acid polypeptide reads, in one-letter code: Cell division protein ZapB (74 aa).

Positions 2–74 (TLDLLEQLES…LVGKIEETES (73 aa)) form a coiled coil.

The protein belongs to the ZapB family. As to quaternary structure, homodimer. The ends of the coiled-coil dimer bind to each other, forming polymers. Interacts with FtsZ.

The protein resides in the cytoplasm. Functionally, non-essential, abundant cell division factor that is required for proper Z-ring formation. It is recruited early to the divisome by direct interaction with FtsZ, stimulating Z-ring assembly and thereby promoting cell division earlier in the cell cycle. Its recruitment to the Z-ring requires functional FtsA or ZipA. This Psychromonas ingrahamii (strain DSM 17664 / CCUG 51855 / 37) protein is Cell division protein ZapB.